A 924-amino-acid polypeptide reads, in one-letter code: Probable dipeptidyl-aminopeptidase B (924 aa).

The tract at residues 1–104 (MPPFTYSDDT…DQRSPGDGQR (104 aa)) is disordered. The Cytoplasmic segment spans residues 1–111 (MPPFTYSDDT…GQRMDRSLRR (111 aa)). Residues 9-23 (DTLRSGRDRFRDHSP) show a composition bias toward basic and acidic residues. The segment covering 31-43 (SQETDSSASTTSI) has biased composition (polar residues). 2 stretches are compositionally biased toward basic and acidic residues: residues 47 to 58 (RIQERLDTKEFT) and 92 to 104 (SRSD…DGQR). A helical; Signal-anchor for type II membrane protein transmembrane segment spans residues 112–132 (WLFIVSGVLVATWVIGLFVFV). The Vacuolar portion of the chain corresponds to 133 to 924 (SSKAYKPSSS…GMKKRAAPTA (792 aa)). 2 N-linked (GlcNAc...) asparagine glycosylation sites follow: Asn-231 and Asn-364. The Charge relay system role is filled by Ser-768. An N-linked (GlcNAc...) asparagine glycan is attached at Asn-827. Residues Asp-845 and His-878 each act as charge relay system in the active site.

This sequence belongs to the peptidase S9B family.

It localises to the vacuole membrane. The enzyme catalyses Release of an N-terminal dipeptide, Xaa-Yaa-|-Zaa-, from a polypeptide, preferentially when Yaa is Pro, provided Zaa is neither Pro nor hydroxyproline.. Type IV dipeptidyl-peptidase which removes N-terminal dipeptides sequentially from polypeptides having unsubstituted N-termini provided that the penultimate residue is proline. This is Probable dipeptidyl-aminopeptidase B (DAPB) from Sordaria macrospora (strain ATCC MYA-333 / DSM 997 / K(L3346) / K-hell).